The primary structure comprises 1845 residues: Proteasome activator complex subunit 4 (1845 aa).

Over residues 1-13 (MEPAERAGGRDPL) the composition is skewed to basic and acidic residues. A disordered region spans residues 1–26 (MEPAERAGGRDPLEPGGRPGPDPQGF). 2 HEAT repeats span residues 475-519 (PEGP…LVDC) and 1000-1039 (NFCC…NHSG). Residue Ser-1123 is modified to Phosphoserine. HEAT repeat units lie at residues 1181–1219 (RVLP…QLKR) and 1356–1394 (DAFL…GSKH). Position 1616 is a phosphoserine (Ser-1616). HEAT repeat units lie at residues 1638-1676 (PHQV…YNLF) and 1682-1720 (EDAV…CNFL). Positions 1652–1740 (ARSSSWHARY…EQLCKTKLPK (89 aa)) are bromodomain-like (BRDL).

It belongs to the BLM10 family. Homodimer. Component of the spermatoproteasome, a form of the proteasome specifically found in testis. Interacts with the 20S and 26S proteasomes. In terms of processing, phosphorylated.

The protein resides in the cytoplasm. It localises to the cytosol. Its subcellular location is the nucleus. It is found in the nucleus speckle. Functionally, associated component of the proteasome that specifically recognizes acetylated histones and promotes ATP- and ubiquitin-independent degradation of core histones during spermatogenesis and DNA damage response. Recognizes and binds acetylated histones via its bromodomain-like (BRDL) region and activates the proteasome by opening the gated channel for substrate entry. Binds to the core proteasome via its C-terminus, which occupies the same binding sites as the proteasomal ATPases, opening the closed structure of the proteasome via an active gating mechanism. Component of the spermatoproteasome, a form of the proteasome specifically found in testis: binds to acetylated histones and promotes degradation of histones, thereby participating actively to the exchange of histones during spermatogenesis. Also involved in DNA damage response in somatic cells, by promoting degradation of histones following DNA double-strand breaks. The protein is Proteasome activator complex subunit 4 (PSME4) of Bos taurus (Bovine).